Consider the following 211-residue polypeptide: Urease accessory protein UreG (211 aa).

Residue 11–18 participates in GTP binding; the sequence is GPVGSGKT.

The protein belongs to the SIMIBI class G3E GTPase family. UreG subfamily. As to quaternary structure, homodimer. UreD, UreF and UreG form a complex that acts as a GTP-hydrolysis-dependent molecular chaperone, activating the urease apoprotein by helping to assemble the nickel containing metallocenter of UreC. The UreE protein probably delivers the nickel.

The protein resides in the cytoplasm. Functionally, facilitates the functional incorporation of the urease nickel metallocenter. This process requires GTP hydrolysis, probably effectuated by UreG. The polypeptide is Urease accessory protein UreG (Photorhabdus laumondii subsp. laumondii (strain DSM 15139 / CIP 105565 / TT01) (Photorhabdus luminescens subsp. laumondii)).